We begin with the raw amino-acid sequence, 340 residues long: Dihydroorotate dehydrogenase (quinone) (340 aa).

FMN-binding positions include alanine 65–lysine 69 and threonine 89. Lysine 69 serves as a coordination point for substrate. Asparagine 114–phenylalanine 118 is a substrate binding site. Positions 142 and 175 each coordinate FMN. Position 175 (asparagine 175) interacts with substrate. Serine 178 acts as the Nucleophile in catalysis. Asparagine 180 is a binding site for substrate. The FMN site is built by lysine 220 and threonine 248. Asparagine 249–threonine 250 serves as a coordination point for substrate. Residues glycine 271, glycine 300, and tyrosine 321–serine 322 contribute to the FMN site.

The protein belongs to the dihydroorotate dehydrogenase family. Type 2 subfamily. As to quaternary structure, monomer. The cofactor is FMN.

The protein resides in the cell membrane. It catalyses the reaction (S)-dihydroorotate + a quinone = orotate + a quinol. The protein operates within pyrimidine metabolism; UMP biosynthesis via de novo pathway; orotate from (S)-dihydroorotate (quinone route): step 1/1. In terms of biological role, catalyzes the conversion of dihydroorotate to orotate with quinone as electron acceptor. In Mannheimia succiniciproducens (strain KCTC 0769BP / MBEL55E), this protein is Dihydroorotate dehydrogenase (quinone).